The primary structure comprises 360 residues: UDP-N-acetylglucosamine--N-acetylmuramyl-(pentapeptide) pyrophosphoryl-undecaprenol N-acetylglucosamine transferase (360 aa).

Serine 198 and glutamine 289 together coordinate UDP-N-acetyl-alpha-D-glucosamine.

This sequence belongs to the glycosyltransferase 28 family. MurG subfamily.

It localises to the cell membrane. It carries out the reaction Mur2Ac(oyl-L-Ala-gamma-D-Glu-L-Lys-D-Ala-D-Ala)-di-trans,octa-cis-undecaprenyl diphosphate + UDP-N-acetyl-alpha-D-glucosamine = beta-D-GlcNAc-(1-&gt;4)-Mur2Ac(oyl-L-Ala-gamma-D-Glu-L-Lys-D-Ala-D-Ala)-di-trans,octa-cis-undecaprenyl diphosphate + UDP + H(+). Its pathway is cell wall biogenesis; peptidoglycan biosynthesis. Its function is as follows. Cell wall formation. Catalyzes the transfer of a GlcNAc subunit on undecaprenyl-pyrophosphoryl-MurNAc-pentapeptide (lipid intermediate I) to form undecaprenyl-pyrophosphoryl-MurNAc-(pentapeptide)GlcNAc (lipid intermediate II). The chain is UDP-N-acetylglucosamine--N-acetylmuramyl-(pentapeptide) pyrophosphoryl-undecaprenol N-acetylglucosamine transferase from Streptococcus pyogenes serotype M12 (strain MGAS2096).